Reading from the N-terminus, the 210-residue chain is Glutathione S-transferase P (210 aa).

In terms of domain architecture, GST N-terminal spans 2-81 (PPYTVVYFPV…HLGRTLGLYG (80 aa)). A Phosphotyrosine; by EGFR modification is found at Tyr4. Glutathione is bound by residues Tyr8, Arg14, Trp39, Lys45, and 52-53 (QL). Phosphothreonine is present on Thr62. A glutathione-binding site is contributed by 65–66 (QS). The GST C-terminal domain occupies 83–204 (DQQEAALVDM…ASPEYVNLPI (122 aa)). Lys103 and Lys116 each carry N6-succinyllysine. Residue Lys128 is modified to N6-acetyllysine. Tyr199 is modified (phosphotyrosine; by EGFR).

The protein belongs to the GST superfamily. Pi family. Homodimer. Interacts with CDK5.

The protein localises to the cytoplasm. Its subcellular location is the mitochondrion. It is found in the nucleus. The enzyme catalyses RX + glutathione = an S-substituted glutathione + a halide anion + H(+). The catalysed reaction is prostaglandin J2 + glutathione = prostaglandin J2-S-(R)-glutathione. It carries out the reaction prostaglandin J2 + glutathione = prostaglandin J2-S-(S)-glutathione. It catalyses the reaction prostaglandin A2 + glutathione = prostaglandin A2-S-(S)-glutathione. The enzyme catalyses 11(S)-hydroxy-14(S),15(S)-epoxy-(5Z,8Z,12E)-eicosatrienoate + glutathione = (11S,15S)-dihydroxy-14(R)-S-glutathionyl-(5Z,8Z,12E)-eicosatrienoate. Conjugation of reduced glutathione to a wide number of exogenous and endogenous hydrophobic electrophiles. Involved in the formation of glutathione conjugates of both prostaglandin A2 (PGA2) and prostaglandin J2 (PGJ2). Participates in the formation of novel hepoxilin regioisomers. Negatively regulates CDK5 activity via p25/p35 translocation to prevent neurodegeneration. The protein is Glutathione S-transferase P of Homo sapiens (Human).